The chain runs to 790 residues: Vacuolar protein sorting-associated protein 35B (790 aa).

Belongs to the VPS35 family. In terms of assembly, component of the retromer complex which consists of VPS29 (MAG1), VPS26 (VPS26A or VPS26B), VPS35 (VPS35A or VPS35B or VPS35C), VPS5/17 (SNX1 or SNX2A or SNX2B). Component of a retromer subcomplex consisting of VPS29 (MAG1), VPS26 (VPS26A or VPS26B), VPS35 (VPS35A or VPS35B or VPS35C). Expressed in siliques and maturing seeds (at protein level).

It localises to the cytoplasm. It is found in the endosome membrane. The protein resides in the prevacuolar compartment membrane. Its subcellular location is the golgi apparatus. The protein localises to the trans-Golgi network membrane. Functionally, plays a role in vesicular protein sorting. Component of the membrane-associated retromer complex which is essential in endosome-to-Golgi retrograde transport. Also involved in the efficient sorting of seed storage proteins globulin 12S and albumin 2S. The VPS29-VPS26-VPS35 subcomplex may be involved in recycling of specific cargos from endosome to the plasma membrane. This is Vacuolar protein sorting-associated protein 35B (VPS35B) from Arabidopsis thaliana (Mouse-ear cress).